The chain runs to 121 residues: Group 1 truncated hemoglobin (121 aa).

Met-1 carries the post-translational modification N-acetylmethionine. Residue His-73 coordinates heme.

The protein belongs to the truncated hemoglobin family. Group I subfamily. As to quaternary structure, monomer. It depends on heme as a cofactor.

The sequence is that of Group 1 truncated hemoglobin from Tetrahymena pyriformis.